The primary structure comprises 193 residues: Ribosome maturation factor RimM (193 aa).

The PRC barrel domain maps to 97–172 (DDEFYLTDLV…LILADPPALV (76 aa)). Positions 168 to 193 (PPALVGDHEGPEEKGLDENEELGDRD) are disordered. Residues 173-193 (GDHEGPEEKGLDENEELGDRD) show a composition bias toward basic and acidic residues.

Belongs to the RimM family. Binds ribosomal protein uS19.

Its subcellular location is the cytoplasm. Its function is as follows. An accessory protein needed during the final step in the assembly of 30S ribosomal subunit, possibly for assembly of the head region. Essential for efficient processing of 16S rRNA. May be needed both before and after RbfA during the maturation of 16S rRNA. It has affinity for free ribosomal 30S subunits but not for 70S ribosomes. This chain is Ribosome maturation factor RimM, found in Caulobacter vibrioides (strain ATCC 19089 / CIP 103742 / CB 15) (Caulobacter crescentus).